The chain runs to 358 residues: Thiol protease aleurain-like (358 aa).

A signal peptide spans 1 to 21 (MSVKLNLSSSILLILFAAAAS). A propeptide spans 22–140 (KEIGFDESNP…KGSHKITEAT (119 aa)) (activation peptide). N-linked (GlcNAc...) asparagine glycosylation is present at Asn125. Disulfide bonds link Cys162–Cys205 and Cys196–Cys238. The active site involves Cys165. Asn254 carries an N-linked (GlcNAc...) asparagine glycan. Residues Cys296 and Cys346 are joined by a disulfide bond. Catalysis depends on residues His305 and Asn325.

It belongs to the peptidase C1 family.

The protein resides in the vacuole. The enzyme catalyses Hydrolysis of proteins, acting as an aminopeptidase (notably, cleaving Arg-|-Xaa bonds) as well as an endopeptidase.. Its function is as follows. May play a role in proteolysis leading to mobilization of nitrogen during senescence and starvation. The sequence is that of Thiol protease aleurain-like from Arabidopsis thaliana (Mouse-ear cress).